Consider the following 320-residue polypeptide: MRSAQVYRWQIPMDAGVVLRDRRLKTRDGLYVCLREGEREGWGEISPLPGFSQETWEEAQSVLLAWVNNWLAGDCELPQMPSVAFGVSCALAELADTLPQAANYRAAPLCNGDPDDLILKLADMPGEKVAKVKVGLYEAVRDGMVVNLLLEAIPDLHLRLDANRAWTPLKGQQFAKYVNPDYRHRIAFLEEPCKTRDDSRAFARETGIAIAWDESLREPDFAFVAEEGVRAVVIKPTLTGSLDKVREQVQAAHALGLTAVISSSIESSLGLTQLARIAAWLTPDTIPGLDTLDLMQAQQVRRWPGSLLPLVDVDALEQLL.

Catalysis depends on Lys133, which acts as the Proton donor. Mg(2+) contacts are provided by Asp161, Glu190, and Asp213. Lys235 serves as the catalytic Proton acceptor.

It belongs to the mandelate racemase/muconate lactonizing enzyme family. MenC type 1 subfamily. A divalent metal cation serves as cofactor.

It catalyses the reaction (1R,6R)-6-hydroxy-2-succinyl-cyclohexa-2,4-diene-1-carboxylate = 2-succinylbenzoate + H2O. It participates in quinol/quinone metabolism; 1,4-dihydroxy-2-naphthoate biosynthesis; 1,4-dihydroxy-2-naphthoate from chorismate: step 4/7. The protein operates within quinol/quinone metabolism; menaquinone biosynthesis. In terms of biological role, converts 2-succinyl-6-hydroxy-2,4-cyclohexadiene-1-carboxylate (SHCHC) to 2-succinylbenzoate (OSB). The sequence is that of o-succinylbenzoate synthase from Escherichia coli O6:H1 (strain CFT073 / ATCC 700928 / UPEC).